Consider the following 290-residue polypeptide: Glycine--tRNA ligase alpha subunit (290 aa).

The protein belongs to the class-II aminoacyl-tRNA synthetase family. In terms of assembly, tetramer of two alpha and two beta subunits.

The protein resides in the cytoplasm. It catalyses the reaction tRNA(Gly) + glycine + ATP = glycyl-tRNA(Gly) + AMP + diphosphate. The chain is Glycine--tRNA ligase alpha subunit from Desulfotalea psychrophila (strain LSv54 / DSM 12343).